The sequence spans 92 residues: Small ribosomal subunit protein uS19 (92 aa).

Belongs to the universal ribosomal protein uS19 family.

Functionally, protein S19 forms a complex with S13 that binds strongly to the 16S ribosomal RNA. This chain is Small ribosomal subunit protein uS19, found in Geobacillus kaustophilus (strain HTA426).